The chain runs to 114 residues: Large ribosomal subunit protein bL20c (114 aa).

It belongs to the bacterial ribosomal protein bL20 family.

It is found in the plastid. It localises to the cyanelle. Functionally, binds directly to 23S ribosomal RNA and is necessary for the in vitro assembly process of the 50S ribosomal subunit. It is not involved in the protein synthesizing functions of that subunit. This Cyanophora paradoxa protein is Large ribosomal subunit protein bL20c (rpl20).